The primary structure comprises 273 residues: DnaJ homolog subfamily C member 27 (273 aa).

Residues 1-18 (MEANMPKRKEPGRSLRIK) are required for interaction with MAPK1. GTP is bound by residues 23-30 (GNAEVGKS), 71-75 (DMAGH), and 134-137 (NKID). The J domain occupies 217–273 (DSWDMLGVKPGASRDEVNKAYRKLAVLLHPDKCVAPGSEDAFKAVVNARTALLKNIK).

Belongs to the small GTPase superfamily. Rab family. As to quaternary structure, interacts directly with MAPK1 (wild-type and kinase-deficient forms). Interacts directly (in GTP-bound form) with MAP2K1 (wild-type and kinase-deficient forms). Overexpressed in gastrointestinal cancers; expression correlates with later tumor-node-metastasis stages of colorectal cancers.

It is found in the nucleus. Functionally, GTPase which can activate the MEK/ERK pathway and induce cell transformation when overexpressed. May act as a nuclear scaffold for MAPK1, probably by association with MAPK1 nuclear export signal leading to enhanced ERK1/ERK2 signaling. The sequence is that of DnaJ homolog subfamily C member 27 (DNAJC27) from Homo sapiens (Human).